Here is a 902-residue protein sequence, read N- to C-terminus: MLIKLLTKVFGSRNDRTLRRMRKVVEQINRMEPEMEQLSDELLKAKTVEFRGRLAQGAALDSLLPEAFATVREASKRVFGMRHFDVQLLGGMVLNERCIAEMRTGEGKTLTATLPAYLNALTGKGVHVVTVNDYLAQRDAENNRPLFEFLGLSVGINLPGMAAPAKRAAYAADITYGTNNEYGFDYLRDNMAFSPEERVQRKLHYALVDEVDSILIDEARTPLIISGPAEDSSELYIKVDKLIPHLKRQEKEDSDTFQGDGHYSVDEKTRQVNLTERGLVLIEELLADVGIMDEGESLYSPANIMLMHHVTAALRAHALFTRDVDYIVKEGEVIIVDEHTGRTMQGRRWSDGLHQAVEAKEGVQIQNENQTLASITFQNYFRLYEKLAGMTGTADTEAFEFSSIYKLDTIVVPTNRPMIRKDLPDLVYMTEQDKIAAIIEDIRERTAKGQPVLVGTVSIEKSEMVSHELTKAGIAHSVLNAKFHAKEADIVAQAGQPGAVTIATNMAGRGTDIMLGGSWQAEIALLESPTEAQIEAIKAEWQTCHDAVLAAGGLHIIGTERHESRRIDNQLRGRSGRQGDAGSSRFYLSLEDSLMRIFASDRVANMMRKLGMKPGEAIEHPWVTKAIANAQRKVESRNFDIRKQLLEYDDVASDQRRAIYTQRNELLDGGDVVDTINSIREDVFKVVIDSYIPPQSLEEMWDVAGLEERLRNDFDLELPITEWLDKEPELHEETLRERILTMAVEHYQSKEEVVGGEMMRSFEKGIMLQTLDSLWKEHLAAMDYLRQGIHLRGYAQKDPKQEYKRESFAMFAAMLESLKYEVISVLSKVQVRMPEEVEALERQRREDAERLARQQQLSHLDDQSAAAQEMASQTGDRKIGRNDPCPCGSGKKYKQCHGRLNA.

ATP-binding positions include Gln-87, 105 to 109, and Asp-512; that span reads GEGKT. The tract at residues 847–902 is disordered; the sequence is DAERLARQQQLSHLDDQSAAAQEMASQTGDRKIGRNDPCPCGSGKKYKQCHGRLNA. Cys-885, Cys-887, Cys-896, and His-897 together coordinate Zn(2+). Over residues 891 to 902 the composition is skewed to basic residues; sequence KKYKQCHGRLNA.

The protein belongs to the SecA family. Monomer and homodimer. Part of the essential Sec protein translocation apparatus which comprises SecA, SecYEG and auxiliary proteins SecDF-YajC and YidC. The cofactor is Zn(2+).

The protein localises to the cell inner membrane. It localises to the cytoplasm. It carries out the reaction ATP + H2O + cellular proteinSide 1 = ADP + phosphate + cellular proteinSide 2.. Its function is as follows. Part of the Sec protein translocase complex. Interacts with the SecYEG preprotein conducting channel. Has a central role in coupling the hydrolysis of ATP to the transfer of proteins into and across the cell membrane, serving both as a receptor for the preprotein-SecB complex and as an ATP-driven molecular motor driving the stepwise translocation of polypeptide chains across the membrane. This is Protein translocase subunit SecA from Edwardsiella ictaluri (strain 93-146).